We begin with the raw amino-acid sequence, 190 residues long: Carbonic anhydrase 2 (190 aa).

This sequence belongs to the beta-class carbonic anhydrase family. As to quaternary structure, homohexamer.

Its subcellular location is the cytoplasm. It carries out the reaction hydrogencarbonate + H(+) = CO2 + H2O. Reversible hydration of carbon dioxide. The polypeptide is Carbonic anhydrase 2 (Flaveria linearis (Narrowleaf yellowtops)).